The chain runs to 624 residues: Probable potassium transport system protein Kup 1 (624 aa).

The next 12 helical transmembrane spans lie at 10-30 (LALG…LYAL), 48-68 (LSLI…MIIF), 94-114 (PLFY…GMLT), 133-153 (LYPY…SLQA), 159-179 (IGYL…ILGI), 210-230 (LLLG…ADIG), 242-262 (FFAA…NLIV), 270-290 (PFFM…ATVA), 331-351 (IYVP…CLAF), 363-383 (IAVN…AISI), 388-408 (IFNV…FLGA), and 413-433 (FITG…IMYS).

It belongs to the HAK/KUP transporter (TC 2.A.72) family.

The protein localises to the cell inner membrane. The enzyme catalyses K(+)(in) + H(+)(in) = K(+)(out) + H(+)(out). Its function is as follows. Transport of potassium into the cell. Likely operates as a K(+):H(+) symporter. The chain is Probable potassium transport system protein Kup 1 from Legionella pneumophila (strain Lens).